The following is a 555-amino-acid chain: Protein tyrosine phosphatase-like protein egg-3 (555 aa).

2 consecutive short sequence motifs (D-box) follow at residues 96–99 and 130–133; these read RILL and RDRL. A Tyrosine-protein phosphatase domain is found at 207–514; it reads FVQEFNRLDR…LFIYRVILRW (308 aa). The short motif at 253–256 is the RXXL motif; required for cortical localization element; it reads RVKL. The RXXL motif motif lies at 266-269; that stretch reads RNEL. Short sequence motifs (RXXL motif; required for cortical localization) lie at residues 509–512 and 525–528; these read RVIL and RAAL.

It belongs to the protein-tyrosine phosphatase family. In terms of assembly, part of a complex, consisting of pseudophosphatases egg-3, egg-4, egg-5 and kinase mbk-2; this complex is required for the oocyte-to-zygote transition. Interacts (via tyrosine-protein phosphatase domain) with kinase mbk-2 (via N-terminus); the interaction does not affect mbk-2 kinase activity, is enhanced by mbk-2 tyrosine phosphorylation status and requires prior binding of mbk-2 to egg-4 and egg-5. Interacts with egg-4.

It localises to the cytoplasm. It is found in the cell cortex. Its function is as follows. Probable pseudophosphatase required for the oocyte-to-zygote transition during which it regulates the polarized dispersal of the cortical actin cytoskeleton, the synthesis of the eggshell chitin layer and the formation of the polar bodies after meiosis I and II. Acts as a scaffold to tether kinase mbk-2 and pseudophosphatases egg-4 and egg-5 to the oocyte cortex and thus restricts mbk-2 activity to the cortex during meiosis I. Regulates mbk-2 localization to cytoplasmic foci during meiosis II. Also required for chitin synthase chs-1 localization to the cell cortex of unfertilized oocytes and to cytoplasmic foci in the fertilized embryo. The sequence is that of Protein tyrosine phosphatase-like protein egg-3 from Caenorhabditis elegans.